Here is a 499-residue protein sequence, read N- to C-terminus: Alpha-amylase B (499 aa).

An N-terminal signal peptide occupies residues 1-21; it reads MMVAWWSLFLYGLQVAAPALA. Cys-51 and Cys-59 are oxidised to a cystine. Substrate is bound by residues Gln-56 and Trp-104. Position 142 (Asn-142) interacts with Ca(2+). His-143 contributes to the substrate binding site. A disulfide bond links Cys-171 and Cys-185. Ca(2+)-binding residues include Glu-183 and Asp-196. Asn-218 carries N-linked (GlcNAc...) asparagine glycosylation. Arg-225 provides a ligand contact to substrate. Asp-227, His-231, and Glu-251 together coordinate Ca(2+). Asp-227 functions as the Nucleophile in the catalytic mechanism. Position 230–231 (230–231) interacts with substrate; the sequence is KH. The Proton donor role is filled by Glu-251. Gly-255 contacts substrate. The cysteines at positions 261 and 304 are disulfide-linked. Positions 318 and 365 each coordinate substrate. Cys-461 and Cys-496 are joined by a disulfide.

The protein belongs to the glycosyl hydrolase 13 family. It depends on Ca(2+) as a cofactor.

It catalyses the reaction Endohydrolysis of (1-&gt;4)-alpha-D-glucosidic linkages in polysaccharides containing three or more (1-&gt;4)-alpha-linked D-glucose units.. In Aspergillus awamori (Black koji mold), this protein is Alpha-amylase B (amyB).